The chain runs to 243 residues: UTP--glucose-1-phosphate uridylyltransferase AglF (243 aa).

This sequence belongs to the UDPGP type 2 family.

It catalyses the reaction alpha-D-glucose 1-phosphate + UTP + H(+) = UDP-alpha-D-glucose + diphosphate. The protein operates within cell surface structure biogenesis; S-layer biogenesis. In terms of biological role, involved in the assembly of a N-linked pentasaccharide that decorates the S-layer glycoprotein and flagellins. Involved in the biosynthesis of the hexuronic acid found at position 3 of the pentasaccharide. The sequence is that of UTP--glucose-1-phosphate uridylyltransferase AglF (aglF) from Haloferax volcanii (strain ATCC 29605 / DSM 3757 / JCM 8879 / NBRC 14742 / NCIMB 2012 / VKM B-1768 / DS2) (Halobacterium volcanii).